Consider the following 285-residue polypeptide: RNA 5'-monophosphate methyltransferase (285 aa).

Residues 1-28 (MAATQELSKGGVEEAVEEDDPAALKPGA) form a disordered region. Residues Arg46, Asn77, Asp111, 136-137 (DI), and Met165 each bind S-adenosyl-L-methionine. The 223-residue stretch at 53-275 (ELLRQLFPPE…KHTEETQAIP (223 aa)) folds into the Bin3-type SAM domain.

Belongs to the methyltransferase superfamily. Interacts with DICER1; the interaction may be mediated by RNA.

Its subcellular location is the cytoplasm. It carries out the reaction a 5'-end 5'-phospho-ribonucleoside-RNA + S-adenosyl-L-methionine = a 5'-end (5'-methylphospho)-ribonucleoside-RNA + S-adenosyl-L-homocysteine. It catalyses the reaction a 5'-end 5'-phospho-ribonucleoside-RNA + 2 S-adenosyl-L-methionine = a 5'-end (5'-bismethylphospho)-ribonucleoside-RNA + 2 S-adenosyl-L-homocysteine. O-methyltransferase that specifically monomethylates 5'-monophosphate of cytoplasmic histidyl tRNA (tRNA(His)), acting as a capping enzyme by protecting tRNA(His) from cleavage by DICER1. Also able, with less efficiently, to methylate the 5' monophosphate of a subset of pre-miRNAs, acting as a negative regulator of miRNA processing. The 5' monophosphate of pre-miRNAs is recognized by DICER1 and is required for pre-miRNAs processing: methylation at this position reduces the processing of pre-miRNAs by DICER1. Was also reported to mediate dimethylation of pre-miR-145; however dimethylation cannot be reproduced by another group which observes a monomethylation of pre-miR-145. The sequence is that of RNA 5'-monophosphate methyltransferase from Rattus norvegicus (Rat).